The following is a 114-amino-acid chain: UPF0342 protein SE_1526 (114 aa).

It belongs to the UPF0342 family.

This is UPF0342 protein SE_1526 from Staphylococcus epidermidis (strain ATCC 12228 / FDA PCI 1200).